Reading from the N-terminus, the 449-residue chain is Putative recombination initiation defects 3 (449 aa).

Positions 21 to 56 (LRRSAEPQASQQLRSQQSQQSFSQGPSSSQRGCGGF) are disordered. Positions 28 to 50 (QASQQLRSQQSQQSFSQGPSSSQ) are enriched in low complexity. The short motif at 437 to 441 (RTKRK) is the Nuclear localization signal element.

Interacts with PRD1; this interaction facilitates a binding to DFO.

The protein resides in the nucleus. Its function is as follows. Involved in DNA cleavage that forms the double-strand breaks (DSB) that initiate meiotic recombination. This Arabidopsis thaliana (Mouse-ear cress) protein is Putative recombination initiation defects 3.